The chain runs to 803 residues: PR domain zinc finger protein 4 (803 aa).

Residues 408 to 532 (KQLVLRQSIV…PESELLFYYS (125 aa)) form the SET domain. C2H2-type zinc fingers lie at residues 593-615 (WKCS…FMGH), 621-643 (HKCD…LKIH), 649-671 (YRCT…MVIH), 677-699 (LKCD…VLIH), and 705-727 (IKCP…LNSH). The C2H2-type 6; degenerate zinc finger occupies 733 to 755 (YVCEKCTKAYLTKYHLTRHLKTC). The segment at 757-803 (EPSSSSSAQEEEDDESEEEDLADSMRTEDCRMGSAVYSTDESLSAHK) is disordered. Acidic residues predominate over residues 765–778 (QEEEDDESEEEDLA). Over residues 792-803 (VYSTDESLSAHK) the composition is skewed to polar residues.

This sequence belongs to the class V-like SAM-binding methyltransferase superfamily.

Its subcellular location is the nucleus. May function as a transcription factor involved in cell differentiation. This chain is PR domain zinc finger protein 4 (Prdm4), found in Mus musculus (Mouse).